The following is a 307-amino-acid chain: HPr kinase/phosphorylase (307 aa).

Residues H136 and K157 contribute to the active site. 151-158 (GESGIGKS) provides a ligand contact to ATP. S158 provides a ligand contact to Mg(2+). Catalysis depends on D175, which acts as the Proton acceptor; for phosphorylation activity. Proton donor; for dephosphorylation activity. The interval 198–207 (LEVRGMGIID) is important for the catalytic mechanism of both phosphorylation and dephosphorylation. E199 serves as a coordination point for Mg(2+). R240 is an active-site residue. An important for the catalytic mechanism of dephosphorylation region spans residues 261–266 (PIRPGR).

It belongs to the HPrK/P family. In terms of assembly, homohexamer. Mg(2+) serves as cofactor.

The catalysed reaction is [HPr protein]-L-serine + ATP = [HPr protein]-O-phospho-L-serine + ADP + H(+). It carries out the reaction [HPr protein]-O-phospho-L-serine + phosphate + H(+) = [HPr protein]-L-serine + diphosphate. Functionally, catalyzes the ATP- as well as the pyrophosphate-dependent phosphorylation of a specific serine residue in HPr, a phosphocarrier protein of the phosphoenolpyruvate-dependent sugar phosphotransferase system (PTS). HprK/P also catalyzes the pyrophosphate-producing, inorganic phosphate-dependent dephosphorylation (phosphorolysis) of seryl-phosphorylated HPr (P-Ser-HPr). The two antagonistic activities of HprK/P are regulated by several intracellular metabolites, which change their concentration in response to the absence or presence of rapidly metabolisable carbon sources (glucose, fructose, etc.) in the growth medium. Therefore, by controlling the phosphorylation state of HPr, HPrK/P is a sensor enzyme that plays a major role in the regulation of carbon metabolism and sugar transport: it mediates carbon catabolite repression (CCR), and regulates PTS-catalyzed carbohydrate uptake and inducer exclusion. This chain is HPr kinase/phosphorylase, found in Clostridium perfringens (strain 13 / Type A).